The chain runs to 498 residues: UDP-N-acetylmuramate--L-alanine ligase (498 aa).

122-128 (GTHGKTS) lines the ATP pocket.

The protein belongs to the MurCDEF family.

It localises to the cytoplasm. The enzyme catalyses UDP-N-acetyl-alpha-D-muramate + L-alanine + ATP = UDP-N-acetyl-alpha-D-muramoyl-L-alanine + ADP + phosphate + H(+). It functions in the pathway cell wall biogenesis; peptidoglycan biosynthesis. Cell wall formation. The protein is UDP-N-acetylmuramate--L-alanine ligase of Corynebacterium jeikeium (strain K411).